Here is a 244-residue protein sequence, read N- to C-terminus: MILIPARLASTRFPRKIVQEILGIPMIVRVAKRAMEVDSTVVASDSLEVVEICRHHGIEAILTSKDHASGTDRIAEAARILELPPHEVILNVQGDEPFLEPEVIASLKEKMQEASLGDSPPFMASAYKKVSQEEASDPNLVKVVLDNHSCALYFSRSPIPFWRDCTESTPLFYRGHLGLYAYTGSSLQAFCALPSSPLEEIEKLEQLRALSHGHKILMIEVETRSFGIDTPQDLNRALKIFGDS.

This sequence belongs to the KdsB family.

It localises to the cytoplasm. The catalysed reaction is 3-deoxy-alpha-D-manno-oct-2-ulosonate + CTP = CMP-3-deoxy-beta-D-manno-octulosonate + diphosphate. Its pathway is nucleotide-sugar biosynthesis; CMP-3-deoxy-D-manno-octulosonate biosynthesis; CMP-3-deoxy-D-manno-octulosonate from 3-deoxy-D-manno-octulosonate and CTP: step 1/1. It functions in the pathway bacterial outer membrane biogenesis; lipopolysaccharide biosynthesis. Activates KDO (a required 8-carbon sugar) for incorporation into bacterial lipopolysaccharide in Gram-negative bacteria. The chain is 3-deoxy-manno-octulosonate cytidylyltransferase from Wolinella succinogenes (strain ATCC 29543 / DSM 1740 / CCUG 13145 / JCM 31913 / LMG 7466 / NCTC 11488 / FDC 602W) (Vibrio succinogenes).